A 562-amino-acid polypeptide reads, in one-letter code: Probable sesquiterpene synthase (562 aa).

Residues aspartate 315, aspartate 319, and glutamate 467 each coordinate Mg(2+). The DDXXD motif motif lies at 315–319 (DDIYD).

The protein belongs to the terpene synthase family. Tpsa subfamily. It depends on Mg(2+) as a cofactor. Mn(2+) is required as a cofactor.

Sesquiterpene synthase. The chain is Probable sesquiterpene synthase (SesquiTPS) from Santalum austrocaledonicum (Sandalwood).